Here is a 249-residue protein sequence, read N- to C-terminus: 1-(5-phosphoribosyl)-5-[(5-phosphoribosylamino)methylideneamino] imidazole-4-carboxamide isomerase (249 aa).

Catalysis depends on Asp8, which acts as the Proton acceptor. Asp130 serves as the catalytic Proton donor.

This sequence belongs to the HisA/HisF family.

It localises to the cytoplasm. It carries out the reaction 1-(5-phospho-beta-D-ribosyl)-5-[(5-phospho-beta-D-ribosylamino)methylideneamino]imidazole-4-carboxamide = 5-[(5-phospho-1-deoxy-D-ribulos-1-ylimino)methylamino]-1-(5-phospho-beta-D-ribosyl)imidazole-4-carboxamide. Its pathway is amino-acid biosynthesis; L-histidine biosynthesis; L-histidine from 5-phospho-alpha-D-ribose 1-diphosphate: step 4/9. The chain is 1-(5-phosphoribosyl)-5-[(5-phosphoribosylamino)methylideneamino] imidazole-4-carboxamide isomerase from Nitrosococcus oceani (strain ATCC 19707 / BCRC 17464 / JCM 30415 / NCIMB 11848 / C-107).